The following is a 216-amino-acid chain: Glycerol-3-phosphate acyltransferase (216 aa).

5 helical membrane-spanning segments follow: residues 4–24, 56–76, 80–100, 112–132, and 138–158; these read IALGMIIFAYLCGSISSAILV, VAVLLFDILKGMLPVWIAYLL, PLYLGLTAIAACLGHIYPVFF, FGAIAPIGWDLTGLMTGTWLL, and GYSSLGAIVSALIAPFYVWWF.

It belongs to the PlsY family. Probably interacts with PlsX.

It localises to the cell inner membrane. It catalyses the reaction an acyl phosphate + sn-glycerol 3-phosphate = a 1-acyl-sn-glycero-3-phosphate + phosphate. It participates in lipid metabolism; phospholipid metabolism. Functionally, catalyzes the transfer of an acyl group from acyl-phosphate (acyl-PO(4)) to glycerol-3-phosphate (G3P) to form lysophosphatidic acid (LPA). This enzyme utilizes acyl-phosphate as fatty acyl donor, but not acyl-CoA or acyl-ACP. The polypeptide is Glycerol-3-phosphate acyltransferase (Yersinia pseudotuberculosis serotype O:1b (strain IP 31758)).